Reading from the N-terminus, the 142-residue chain is MKTLSAKPAEVTHDWYVVDADGKTLGRLATQIATRLRGKHKTCFTPHVDTGDFIVVINAEKIAVTGKKAQDKKYYRHSGYPGGIKETNFTKLIAHKPEDVLHKAVKGMLPKGPLGYAMIKKLKLYAGTEHPHEAQQPKELDI.

The protein belongs to the universal ribosomal protein uL13 family. Part of the 50S ribosomal subunit.

Functionally, this protein is one of the early assembly proteins of the 50S ribosomal subunit, although it is not seen to bind rRNA by itself. It is important during the early stages of 50S assembly. The protein is Large ribosomal subunit protein uL13 of Psychrobacter arcticus (strain DSM 17307 / VKM B-2377 / 273-4).